A 508-amino-acid chain; its full sequence is Photosystem II CP47 reaction center protein (508 aa).

Transmembrane regions (helical) follow at residues 21–36 (AVHI…WAGS), 101–115 (IVFS…IWHW), 140–156 (GIHL…FGAF), 203–218 (IAAG…FHLS), 237–252 (VLSS…AFVV), and 457–472 (SFAL…HGSR).

The protein belongs to the PsbB/PsbC family. PsbB subfamily. As to quaternary structure, PSII is composed of 1 copy each of membrane proteins PsbA, PsbB, PsbC, PsbD, PsbE, PsbF, PsbH, PsbI, PsbJ, PsbK, PsbL, PsbM, PsbT, PsbX, PsbY, PsbZ, Psb30/Ycf12, at least 3 peripheral proteins of the oxygen-evolving complex and a large number of cofactors. It forms dimeric complexes. The cofactor is Binds multiple chlorophylls. PSII binds additional chlorophylls, carotenoids and specific lipids..

Its subcellular location is the plastid. It localises to the chloroplast thylakoid membrane. One of the components of the core complex of photosystem II (PSII). It binds chlorophyll and helps catalyze the primary light-induced photochemical processes of PSII. PSII is a light-driven water:plastoquinone oxidoreductase, using light energy to abstract electrons from H(2)O, generating O(2) and a proton gradient subsequently used for ATP formation. This chain is Photosystem II CP47 reaction center protein, found in Populus trichocarpa (Western balsam poplar).